Consider the following 458-residue polypeptide: Exodeoxyribonuclease 7 large subunit (458 aa).

The protein belongs to the XseA family. Heterooligomer composed of large and small subunits.

It is found in the cytoplasm. It carries out the reaction Exonucleolytic cleavage in either 5'- to 3'- or 3'- to 5'-direction to yield nucleoside 5'-phosphates.. In terms of biological role, bidirectionally degrades single-stranded DNA into large acid-insoluble oligonucleotides, which are then degraded further into small acid-soluble oligonucleotides. The polypeptide is Exodeoxyribonuclease 7 large subunit (Shouchella clausii (strain KSM-K16) (Alkalihalobacillus clausii)).